Here is a 754-residue protein sequence, read N- to C-terminus: 1,4-alpha-glucan branching enzyme GlgB (754 aa).

The active-site Nucleophile is the aspartate 431. Glutamate 484 (proton donor) is an active-site residue.

This sequence belongs to the glycosyl hydrolase 13 family. GlgB subfamily. Monomer.

It catalyses the reaction Transfers a segment of a (1-&gt;4)-alpha-D-glucan chain to a primary hydroxy group in a similar glucan chain.. Its pathway is glycan biosynthesis; glycogen biosynthesis. Its function is as follows. Catalyzes the formation of the alpha-1,6-glucosidic linkages in glycogen by scission of a 1,4-alpha-linked oligosaccharide from growing alpha-1,4-glucan chains and the subsequent attachment of the oligosaccharide to the alpha-1,6 position. This is 1,4-alpha-glucan branching enzyme GlgB from Prochlorococcus marinus (strain MIT 9515).